The primary structure comprises 384 residues: Sphingosine kinase 1 (384 aa).

The DAGKc domain maps to 12–159 (PRPCRVLVLL…MNLLSLHTAS (148 aa)). ATP contacts are provided by residues 22–24 (NPR) and 54–58 (TERRN). A substrate-binding site is contributed by 79-82 (SGDG). Residue Asp81 is the Proton donor/acceptor of the active site. ATP is bound by residues Glu86 and 111-113 (GSG). 2 consecutive short sequence motifs (nuclear export signal) follow at residues 147–155 (LSPMNLLSL) and 161–169 (LRLFSVLSL). A substrate-binding site is contributed by Asp178. Arg185 and Arg191 together coordinate ATP. Residue Thr193 is modified to Phosphothreonine. Phosphoserine is present on Ser225. An ATP-binding site is contributed by 341–343 (DGE).

Interacts with ACY1. Binds to calmodulin. Interacts with SPHKAP. Interacts with CIB1, the interaction occurs in a calcium-dependent manner. Interacts with TRAF2. Interacts with EEF1A1; the interaction enhances SPHK1 kinase activity. Mg(2+) serves as cofactor. In terms of tissue distribution, widely expressed with highest levels in adult liver, kidney, heart and skeletal muscle. Expressed in brain cortex (at protein level).

The protein resides in the cytoplasm. Its subcellular location is the nucleus. The protein localises to the cell membrane. It is found in the endosome membrane. It localises to the membrane. The protein resides in the clathrin-coated pit. Its subcellular location is the synapse. The catalysed reaction is a sphingoid base + ATP = a sphingoid 1-phosphate + ADP + H(+). The enzyme catalyses L-seryl-[protein] + acetyl-CoA = O-acetyl-L-seryl-[protein] + CoA. It catalyses the reaction sphinganine + ATP = sphinganine 1-phosphate + ADP + H(+). It carries out the reaction sphing-4-enine + ATP = sphing-4-enine 1-phosphate + ADP + H(+). The catalysed reaction is 1-O-hexadecyl-2-amino-sn-glycerol + ATP = 1-O-hexadecyl-2-desoxy-2-amino-sn-glycero-3-phosphate + ADP + H(+). Acetyltransferase activity increases in presence of the kinase substrate, sphingosine. In Purkinje cells, kinase activity on sphingosine increases in presence of VEGFA. In neurons, kinase activity increases during the first 24h in presence of Amyloid-beta protein 42 to decrease after 96h. In terms of biological role, catalyzes the phosphorylation of sphingosine to form sphingosine 1-phosphate (SPP), a lipid mediator with both intra- and extracellular functions. Also acts on D-erythro-sphingosine and to a lesser extent sphinganine, but not other lipids, such as D,L-threo-dihydrosphingosine, N,N-dimethylsphingosine, diacylglycerol, ceramide, or phosphatidylinositol. In contrast to proapoptotic SPHK2, has a negative effect on intracellular ceramide levels, enhances cell growth and inhibits apoptosis. Involved in the regulation of inflammatory response and neuroinflammation. Via the product sphingosine 1-phosphate, stimulates TRAF2 E3 ubiquitin ligase activity, and promotes activation of NF-kappa-B in response to TNF signaling leading to IL17 secretion. In response to TNF and in parallel to NF-kappa-B activation, negatively regulates RANTES induction through p38 MAPK signaling pathway. Involved in endocytic membrane trafficking induced by sphingosine, recruited to dilate endosomes, also plays a role on later stages of endosomal maturation and membrane fusion independently of its kinase activity. In Purkinje cells, seems to be also involved in the regulation of autophagosome-lysosome fusion upon VEGFA. Has serine acetyltransferase activity on PTGS2/COX2 in an acetyl-CoA dependent manner. The acetyltransferase activity increases in presence of the kinase substrate, sphingosine. During neuroinflammation, through PTGS2 acetylation, promotes neuronal secretion of specialized preresolving mediators (SPMs), especially 15-R-lipoxin A4, which results in an increase of phagocytic microglia. The chain is Sphingosine kinase 1 from Homo sapiens (Human).